The primary structure comprises 291 residues: MIPIQLTVFFMIIYVLESLTIIVQSSLIVAVLGREWLQVRRLMPVDMILISLGISRFCLQWASMLNNFCSYFNLNYVLCNLTITWEFFNILTFWLNSLLTVFYCIKASSFTHHIFLWLRWRILRLFPWILLGSLMITCVTIIPSAIGNYIQIQLLTMEHLPRNSTVTDKLEKFHQYQFQAHTVALVIPFILFLASTILLMASLTKQIQHHSTGHCNPSMKAHFTALRSLAVLFIVFTSYFLTILITIIGTLFDKRCWLWVWEAFVYAFILMHSTSLMLSSPTLKRILKGKC.

Position 1 (methionine 1) is a topological domain, extracellular. A helical transmembrane segment spans residues 2-22 (IPIQLTVFFMIIYVLESLTII). The Cytoplasmic segment spans residues 23 to 41 (VQSSLIVAVLGREWLQVRR). The helical transmembrane segment at 42–62 (LMPVDMILISLGISRFCLQWA) threads the bilayer. Residues 63–84 (SMLNNFCSYFNLNYVLCNLTIT) lie on the Extracellular side of the membrane. A glycan (N-linked (GlcNAc...) asparagine) is linked at asparagine 80. The chain crosses the membrane as a helical span at residues 85–105 (WEFFNILTFWLNSLLTVFYCI). The Cytoplasmic segment spans residues 106 to 125 (KASSFTHHIFLWLRWRILRL). Residues 126–146 (FPWILLGSLMITCVTIIPSAI) form a helical membrane-spanning segment. The Extracellular segment spans residues 147–182 (GNYIQIQLLTMEHLPRNSTVTDKLEKFHQYQFQAHT). Asparagine 163 carries an N-linked (GlcNAc...) asparagine glycan. A helical membrane pass occupies residues 183 to 203 (VALVIPFILFLASTILLMASL). Residues 204 to 228 (TKQIQHHSTGHCNPSMKAHFTALRS) lie on the Cytoplasmic side of the membrane. Residues 229 to 249 (LAVLFIVFTSYFLTILITIIG) traverse the membrane as a helical segment. Topologically, residues 250-257 (TLFDKRCW) are extracellular. Residues 258 to 278 (LWVWEAFVYAFILMHSTSLML) traverse the membrane as a helical segment. Over 279–291 (SSPTLKRILKGKC) the chain is Cytoplasmic.

It belongs to the G-protein coupled receptor T2R family. As to quaternary structure, interacts with RTP3 and RTP4.

It is found in the cell membrane. Its function is as follows. Receptor that may play a role in the perception of bitterness and is gustducin-linked. May play a role in sensing the chemical composition of the gastrointestinal content. The activity of this receptor may stimulate alpha gustducin, mediate PLC-beta-2 activation and lead to the gating of TRPM5. The protein is Taste receptor type 2 member 16 (TAS2R16) of Pan paniscus (Pygmy chimpanzee).